A 391-amino-acid polypeptide reads, in one-letter code: PPE family protein PPE18 (391 aa).

Belongs to the mycobacterial PPE family. As to quaternary structure, interacts with human TLR2.

Its subcellular location is the secreted. The protein localises to the cell wall. The protein resides in the cell surface. Could be a crucial virulence factor for intracellular survival of M.tuberculosis. Favors development of Th2-type response, and down-regulates the pro-inflammatory and Th1-type response. Specifically interacts with the human Toll-like receptor 2 (TLR2), leading to an early and sustained activation of p38 MAPK, which induces IL-10 production and activates Th2-type immune response. Also inhibits pro-inflammatory cytokines IL-12p40 and TNF-alpha production. Acts by up-regulating the expression as well as tyrosine phosphorylation of suppressor of cytokine signaling 3 (SOCS-3), leading to the inhibition of phosphorylation of I-kappa-B-alpha, thereby preventing nuclear translocation of the NF-kappa-B/REL subunits and expression of NF-kappa-B regulated genes like IL-12 and TNF-alpha. Induction of SOCS-3 probably depends on the activation of p38 MAPK. This Mycobacterium tuberculosis (strain ATCC 25618 / H37Rv) protein is PPE family protein PPE18.